Consider the following 1414-residue polypeptide: Alpha-(1-&gt;3)-arabinofuranosyltransferase (1414 aa).

9 consecutive transmembrane segments (helical) span residues 57–77 (YLFP…PGWV), 81–101 (LWWA…AEAL), 128–148 (AISS…PVIL), 167–187 (VALM…AAVI), 203–223 (AWWL…LLML), 273–293 (STTA…GLAL), 302–322 (LITM…GGLG), 352–372 (LPLA…GSAP), and 389–409 (VAVA…AWTA). The 159-residue stretch at 687–845 (YPSDGADLVY…QYDASGFAHP (159 aa)) folds into the F5/8 type C domain. 4 helical membrane passes run 1253–1273 (VGLI…LIPV), 1297–1317 (ALVA…GAAM), 1333–1353 (VWDN…GSVL), and 1364–1384 (YVGH…FLAA). The tract at residues 1393–1414 (PEPSEDGRSAKPEHTGASAHAG) is disordered. The segment covering 1394–1406 (EPSEDGRSAKPEH) has biased composition (basic and acidic residues).

It localises to the membrane. It carries out the reaction Adds an alpha-D-arabinofuranosyl group from trans,octacis-decaprenylphospho-beta-D-arabinofuranose at the 3-O-position of an alpha-(1-&gt;5)-arabinofuranan chain attached to a beta-(1-&gt;5)-galactofuranan chain.. Its pathway is cell wall biogenesis; cell wall polysaccharide biosynthesis. In terms of biological role, involved in the biosynthesis of the arabinogalactan (AG) region of the mycolylarabinogalactan-peptidoglycan (mAGP) complex, an essential component of the mycobacterial cell wall. Catalyzes the addition of an arabinofuranosyl (Araf) residue from the sugar donor decaprenyl-phospho-arabinose (DPA) on the C-3 of an alpha-(1-&gt;5)-linked Araf from the arabinan backbone of AG. This is Alpha-(1-&gt;3)-arabinofuranosyltransferase (aftD) from Mycolicibacterium smegmatis (strain ATCC 700084 / mc(2)155) (Mycobacterium smegmatis).